Reading from the N-terminus, the 160-residue chain is Cytochrome b6-f complex subunit 4 (160 aa).

The next 3 helical transmembrane spans lie at 36 to 56, 95 to 115, and 131 to 151; these read LLYMFPVVILGTIACLTGLAV, LLGIVLQSMIPLGLIAIPFIE, and AVFLFGTVFTLYLGIGAALPI.

It belongs to the cytochrome b family. PetD subfamily. As to quaternary structure, the 4 large subunits of the cytochrome b6-f complex are cytochrome b6, subunit IV (17 kDa polypeptide, PetD), cytochrome f and the Rieske protein, while the 4 small subunits are PetG, PetL, PetM and PetN. The complex functions as a dimer.

It is found in the cellular thylakoid membrane. Functionally, component of the cytochrome b6-f complex, which mediates electron transfer between photosystem II (PSII) and photosystem I (PSI), cyclic electron flow around PSI, and state transitions. The chain is Cytochrome b6-f complex subunit 4 from Synechococcus elongatus (strain ATCC 33912 / PCC 7942 / FACHB-805) (Anacystis nidulans R2).